The following is a 227-amino-acid chain: Ribonuclease 3 (227 aa).

The RNase III domain maps to 4–133 (FEKLETLLGY…LIAAIYLDSN (130 aa)). E46 is a binding site for Mg(2+). Residue D50 is part of the active site. Residues N119 and E122 each coordinate Mg(2+). E122 is an active-site residue. Residues 158–226 (DPKTALQEWA…ARCLLHRLKN (69 aa)) form the DRBM domain.

This sequence belongs to the ribonuclease III family. In terms of assembly, homodimer. Mg(2+) is required as a cofactor.

The protein resides in the cytoplasm. The catalysed reaction is Endonucleolytic cleavage to 5'-phosphomonoester.. In terms of biological role, digests double-stranded RNA. Involved in the processing of primary rRNA transcript to yield the immediate precursors to the large and small rRNAs (23S and 16S). Processes some mRNAs, and tRNAs when they are encoded in the rRNA operon. Processes pre-crRNA and tracrRNA of type II CRISPR loci if present in the organism. The chain is Ribonuclease 3 from Rickettsia typhi (strain ATCC VR-144 / Wilmington).